Consider the following 188-residue polypeptide: Large ribosomal subunit protein bL35m (188 aa).

This sequence belongs to the bacterial ribosomal protein bL35 family.

It localises to the mitochondrion. This Bos taurus (Bovine) protein is Large ribosomal subunit protein bL35m (MRPL35).